Consider the following 244-residue polypeptide: Ribosome-inactivating protein cucurmosin (244 aa).

Active-site residues include Y70, Y109, E158, and R161. Residues N189 and N225 are each glycosylated (N-linked (GlcNAc...) asparagine).

The protein belongs to the ribosome-inactivating protein family. Type 1 RIP subfamily. The N-linked glycan consists of GlcNAc2Man3Xyl.

The enzyme catalyses Endohydrolysis of the N-glycosidic bond at one specific adenosine on the 28S rRNA.. Functionally, has cytotoxic activity towards cancer cells, but not normal cells. Inhibits the growth of the human leukemia cell line K562, the murine melanoma cell line B16 and the lung adenocarcinoma cell line A549 with IC(50) values of 88.1 nM, 63.4 nM and 359.3 nM respectively. The sequence is that of Ribosome-inactivating protein cucurmosin from Cucurbita moschata (Winter crookneck squash).